The following is a 436-amino-acid chain: Bystin (436 aa).

A disordered region spans residues methionine 1–proline 105. Serine 54 carries the phosphoserine modification. Residues threonine 70 to threonine 86 show a composition bias toward basic and acidic residues. Positions glycine 96 to proline 105 are enriched in acidic residues. The residue at position 97 (serine 97) is a Phosphoserine. Threonine 155 carries the post-translational modification Phosphothreonine. A phosphoserine mark is found at serine 166 and serine 413.

This sequence belongs to the bystin family. Binds trophinin, tastin and cytokeratins.

It localises to the cytoplasm. Its subcellular location is the nucleus. The protein localises to the nucleolus. Functionally, required for processing of 20S pre-rRNA precursor and biogenesis of 40S ribosomal subunits. The protein is Bystin of Rattus norvegicus (Rat).